Here is a 113-residue protein sequence, read N- to C-terminus: U11-theraphotoxin-Hhn1a (113 aa).

An N-terminal signal peptide occupies residues 1 to 21 (MDTVRVAFLLVLVLAVSLGQA). The propeptide occupies 22–74 (DKDENRMEMQEKTEQGKSYLDFAENLLLQKLEELEAKLLEEDSEESRNSRQKR). Positions 60–69 (LEEDSEESRN) are enriched in basic and acidic residues. The tract at residues 60–83 (LEEDSEESRNSRQKRCIGEGVPCD) is disordered. 3 cysteine pairs are disulfide-bonded: cysteine 75–cysteine 90, cysteine 82–cysteine 95, and cysteine 89–cysteine 110.

The protein belongs to the neurotoxin 14 (magi-1) family. 01 (HNTX-16) subfamily. In terms of tissue distribution, expressed by the venom gland.

It localises to the secreted. Its function is as follows. Probable ion channel inhibitor. The polypeptide is U11-theraphotoxin-Hhn1a (Cyriopagopus hainanus (Chinese bird spider)).